The sequence spans 228 residues: Phosphoglycolate phosphatase (228 aa).

The Nucleophile role is filled by aspartate 9. Mg(2+)-binding residues include aspartate 9 and aspartate 11. Residue lysine 151 participates in substrate binding. Mg(2+)-binding residues include aspartate 174 and aspartate 178.

The protein belongs to the archaeal SPP-like hydrolase family. Mg(2+) is required as a cofactor.

The catalysed reaction is 2-phosphoglycolate + H2O = glycolate + phosphate. Its function is as follows. Catalyzes the dephosphorylation of 2-phosphoglycolate. This is Phosphoglycolate phosphatase from Pyrobaculum aerophilum (strain ATCC 51768 / DSM 7523 / JCM 9630 / CIP 104966 / NBRC 100827 / IM2).